A 214-amino-acid chain; its full sequence is Phosphatidylcholine transfer protein (214 aa).

Met-1 is modified (N-acetylmethionine). The START domain occupies 1 to 212 (MELAAGSFSE…MARACQNYLK (212 aa)). Residues Tyr-72 and Arg-78 each coordinate a 1,2-diacyl-sn-glycero-3-phosphocholine. Ser-139 carries the phosphoserine modification. Gln-157 serves as a coordination point for a 1,2-diacyl-sn-glycero-3-phosphocholine.

In terms of assembly, interacts with ACOT13/THEM2. In terms of tissue distribution, highest expression in liver, placenta, testis, kidney and heart. Low levels in brain and lung. No expression detected in thymus.

The protein localises to the cytoplasm. Functionally, catalyzes the transfer of phosphatidylcholine between membranes. Binds a single lipid molecule. This chain is Phosphatidylcholine transfer protein (PCTP), found in Homo sapiens (Human).